We begin with the raw amino-acid sequence, 20 residues long: Non-secretory ribonuclease (20 aa).

Catalysis depends on H16, which acts as the Proton acceptor.

This sequence belongs to the pancreatic ribonuclease family. As to quaternary structure, interacts with and forms a tight 1:1 complex with RNH1. Dimerization of two such complexes may occur.

The protein localises to the lysosome. Its subcellular location is the cytoplasmic granule. The enzyme catalyses an [RNA] containing cytidine + H2O = an [RNA]-3'-cytidine-3'-phosphate + a 5'-hydroxy-ribonucleotide-3'-[RNA].. It carries out the reaction an [RNA] containing uridine + H2O = an [RNA]-3'-uridine-3'-phosphate + a 5'-hydroxy-ribonucleotide-3'-[RNA].. In terms of biological role, this is a non-secretory ribonuclease. It is a pyrimidine specific nuclease with a slight preference for U. Cytotoxin and helminthotoxin. Possesses a wide variety of biological activities. The protein is Non-secretory ribonuclease (RNASE2) of Sus scrofa (Pig).